The sequence spans 360 residues: Phenylalanine--tRNA ligase alpha subunit (360 aa).

Residue Glu-260 participates in Mg(2+) binding.

The protein belongs to the class-II aminoacyl-tRNA synthetase family. Phe-tRNA synthetase alpha subunit type 1 subfamily. Tetramer of two alpha and two beta subunits. The cofactor is Mg(2+).

The protein localises to the cytoplasm. The enzyme catalyses tRNA(Phe) + L-phenylalanine + ATP = L-phenylalanyl-tRNA(Phe) + AMP + diphosphate + H(+). This chain is Phenylalanine--tRNA ligase alpha subunit, found in Sinorhizobium medicae (strain WSM419) (Ensifer medicae).